The primary structure comprises 531 residues: CTP synthase (531 aa).

The tract at residues Met-1–Leu-265 is amidoligase domain. Ser-13 contributes to the CTP binding site. A UTP-binding site is contributed by Ser-13. An ATP-binding site is contributed by Ser-14–Ile-19. Residue Tyr-54 coordinates L-glutamine. Asp-71 contributes to the ATP binding site. Mg(2+) is bound by residues Asp-71 and Glu-139. CTP-binding positions include Asp-146–Glu-148, Lys-186–Gln-191, and Lys-222. UTP is bound by residues Lys-186 to Gln-191 and Lys-222. The Glutamine amidotransferase type-1 domain maps to Asn-290–Lys-529. Gly-349 is an L-glutamine binding site. Catalysis depends on Cys-376, which acts as the Nucleophile; for glutamine hydrolysis. L-glutamine-binding positions include Leu-377 to Gln-380, Glu-400, and Arg-457. Active-site residues include His-502 and Glu-504.

It belongs to the CTP synthase family. Homotetramer.

The enzyme catalyses UTP + L-glutamine + ATP + H2O = CTP + L-glutamate + ADP + phosphate + 2 H(+). It catalyses the reaction L-glutamine + H2O = L-glutamate + NH4(+). It carries out the reaction UTP + NH4(+) + ATP = CTP + ADP + phosphate + 2 H(+). Its pathway is pyrimidine metabolism; CTP biosynthesis via de novo pathway; CTP from UDP: step 2/2. With respect to regulation, allosterically activated by GTP, when glutamine is the substrate; GTP has no effect on the reaction when ammonia is the substrate. The allosteric effector GTP functions by stabilizing the protein conformation that binds the tetrahedral intermediate(s) formed during glutamine hydrolysis. Inhibited by the product CTP, via allosteric rather than competitive inhibition. Functionally, catalyzes the ATP-dependent amination of UTP to CTP with either L-glutamine or ammonia as the source of nitrogen. Regulates intracellular CTP levels through interactions with the four ribonucleotide triphosphates. The polypeptide is CTP synthase (Aquifex aeolicus (strain VF5)).